We begin with the raw amino-acid sequence, 752 residues long: Photosystem I P700 chlorophyll a apoprotein A1 (752 aa).

The next 8 membrane-spanning stretches (helical) occupy residues 73 to 96, 159 to 182, 198 to 222, 294 to 312, 349 to 372, 388 to 414, 436 to 458, and 533 to 551; these read IFSA…FHGA, LYWT…FHYH, MNHH…HISL, TAHH…GHMY, WHAQ…HHMY, LSLF…IFMV, AIIS…LYIH, and FLVH…LILL. C575 and C584 together coordinate [4Fe-4S] cluster. Helical transmembrane passes span 591–612 and 666–688; these read HIFL…HFSW and LSAY…MFLF. H677 contributes to the chlorophyll a' binding site. Positions 685 and 693 each coordinate chlorophyll a. W694 contributes to the phylloquinone binding site. The helical transmembrane segment at 726 to 746 threads the bilayer; that stretch reads AVGLAHYLLGGIGTTWSFFLA.

This sequence belongs to the PsaA/PsaB family. As to quaternary structure, the PsaA/B heterodimer binds the P700 chlorophyll special pair and subsequent electron acceptors. PSI consists of a core antenna complex that captures photons, and an electron transfer chain that converts photonic excitation into a charge separation. The eukaryotic PSI reaction center is composed of at least 11 subunits. It depends on P700 is a chlorophyll a/chlorophyll a' dimer, A0 is one or more chlorophyll a, A1 is one or both phylloquinones and FX is a shared 4Fe-4S iron-sulfur center. as a cofactor.

It localises to the plastid. It is found in the chloroplast thylakoid membrane. The catalysed reaction is reduced [plastocyanin] + hnu + oxidized [2Fe-2S]-[ferredoxin] = oxidized [plastocyanin] + reduced [2Fe-2S]-[ferredoxin]. PsaA and PsaB bind P700, the primary electron donor of photosystem I (PSI), as well as the electron acceptors A0, A1 and FX. PSI is a plastocyanin/cytochrome c6-ferredoxin oxidoreductase, converting photonic excitation into a charge separation, which transfers an electron from the donor P700 chlorophyll pair to the spectroscopically characterized acceptors A0, A1, FX, FA and FB in turn. Oxidized P700 is reduced on the lumenal side of the thylakoid membrane by plastocyanin or cytochrome c6. This chain is Photosystem I P700 chlorophyll a apoprotein A1, found in Emiliania huxleyi (Coccolithophore).